A 284-amino-acid polypeptide reads, in one-letter code: Rubber cis-polyprenyltransferase HRT2 (284 aa).

The active site involves Asp41.

Belongs to the UPP synthase family. As to expression, predominantly expressed in latex.

It catalyses the reaction (cis-prenyl)(n)-diphosphate + isopentenyl diphosphate = (cis-prenyl)(n+1)-diphosphate + diphosphate. Proposed to be involved in rubber biosynthesis as a particle-bound rubber transferase responsible for the cis-1,4-polymerization of isoprene subunits. Probably requires additional factors for the production of high molecular mass rubber. This Hevea brasiliensis (Para rubber tree) protein is Rubber cis-polyprenyltransferase HRT2 (HRT2).